The sequence spans 95 residues: Co-chaperonin GroES (95 aa).

It belongs to the GroES chaperonin family. In terms of assembly, heptamer of 7 subunits arranged in a ring. Interacts with the chaperonin GroEL.

It localises to the cytoplasm. Together with the chaperonin GroEL, plays an essential role in assisting protein folding. The GroEL-GroES system forms a nano-cage that allows encapsulation of the non-native substrate proteins and provides a physical environment optimized to promote and accelerate protein folding. GroES binds to the apical surface of the GroEL ring, thereby capping the opening of the GroEL channel. The polypeptide is Co-chaperonin GroES (Jannaschia sp. (strain CCS1)).